The primary structure comprises 446 residues: Alpha-galacturonidase (446 aa).

10-72 (IKIAYIGGGS…GRWRYEAVST (63 aa)) contributes to the NAD(+) binding site. Asn151 is a binding site for substrate. Cys173 provides a ligand contact to Mn(2+). Residue His174 is the Proton donor of the active site. Position 210 (His210) interacts with Mn(2+).

Belongs to the glycosyl hydrolase 4 family. In terms of assembly, homotetramer. It depends on NAD(+) as a cofactor. Mn(2+) serves as cofactor.

The catalysed reaction is [(1-&gt;4)-alpha-D-galacturonosyl](n) + H2O = alpha-D-galacturonate + [(1-&gt;4)-alpha-D-galacturonosyl](n-1). In terms of biological role, alpha-galacturonidase able to catalyze the hydrolysis of the chromogenic substrate p-nitrophenyl-alpha-D-galacturonic acid (pNPalphaGalUA), and of the probable natural substrate alpha-1,4-di-galacturonate (GalUA(2)). Can neither hydrolyze pNPbetaGalUA, nor the stereoisomeric pNPalphaGlcUA. Does not display alpha- or beta-glucosidase activity as it fails to hydrolyze melibiose, raffinose, lactose and the chromogenic analogs, pNPalphaGal and pNPbetaGal. Cannot use the following compounds as substrates: pNP-N-acetyl-alpha- and beta-D-galactosaminide, pNP-N-acetyl-alpha- and beta-D-glucosaminide, pNP-alpha-L- and beta-L-arabinopyranoside, pNP-alpha- and beta-D-glucuronide, pNP-alpha- and beta-D-glucopyranoside, pNP-alpha- and beta-D-glucopyranoside 6-phosphate, pNP-alpha-D-galactopyranoside 6-phosphate and oNP-beta-D-galactopyranoside 6-phosphate. This is Alpha-galacturonidase (lplD) from Bacillus subtilis (strain 168).